The following is a 145-amino-acid chain: Cuticle protein 5 (145 aa).

This Blaberus craniifer (Death's head cockroach) protein is Cuticle protein 5.